A 338-amino-acid chain; its full sequence is Large ribosomal subunit protein uL3 (338 aa).

Disordered stretches follow at residues 1-44 (MPQP…GFAG), 151-170 (AVPS…VGGG), 206-259 (VTKG…GQTG), and 312-338 (FRPA…SNQG). Residues 22–31 (SETPRFNSWP) are compositionally biased toward polar residues. A compositionally biased stretch (basic residues) spans 220–237 (GVQKRKGKHARQGWRRRI). Residues 247 to 259 (RVRSTVPQQGQTG) show a composition bias toward polar residues.

The protein belongs to the universal ribosomal protein uL3 family. In terms of assembly, part of the 50S ribosomal subunit. Forms a cluster with proteins L14 and L24e. Interacts weakly with protein L13.

In terms of biological role, one of the primary rRNA binding proteins, it binds directly near the 3'-end of the 23S rRNA, where it nucleates assembly of the 50S subunit. This is Large ribosomal subunit protein uL3 (rpl3) from Haloarcula marismortui (strain ATCC 43049 / DSM 3752 / JCM 8966 / VKM B-1809) (Halobacterium marismortui).